The sequence spans 2017 residues: MSLGLAGAQEVELTLETVIQTLESSVLCQEKGLGARDLAQDAQITSLPALIREIVTRNLSQPESPVLLPATEMASLLSLQEENQLLQQELSRVEDLLAQSRAERDELAIKYNAVSERLEQALRLEPGELETQEPRGLVRQSVELRRQLQEEQASYRRKLQAYQEGQQRQAQLVQRLQGKILQYKKRCSELEQQLLERSGELEQQRLRDTEHSQDLESALIRLEEEQQRSASLAQVNAMLREQLDQAGSANQALSEDIRKVTNDWTRCRKELEHREAAWRREEESFNAYFSNEHSRLLLLWRQVVGFRRLVSEVKMFTERDLLQLGGELARTSRAVQEAGLGLSTGLRLAESRAEAALEKQALLQAQLEEQLRDKVLREKDLAQQQMQSDLDKADLSARVTELGLAVKRLEKQNLEKDQVNKDLTEKLEALESLRLQEQAALETEDGEGLQQTLRDLAQAVLSDSESGVQLSGSERTADASNGSLRGLSGQRTPSPPRRSSPGRGRSPRRGPSPACSDSSTLALIHSALHKRQLQVQDMRGRYEASQDLLGTLRKQLSDSESERRALEEQLQRLRDKTDGAMQAHEDAQREVQRLRSANELLSREKSNLAHSLQVAQQQAEELRQEREKLQAAQEELRRQRDRLEEEQEDAVQDGARVRRELERSHRQLEQLEGKRSVLAKELVEVREALSRATLQRDMLQAEKAEVAEALTKAEAGRVELELSMTKLRAEEASLQDSLSKLSALNESLAQDKLDLNRLVAQLEEEKSALQGRQRQAEQEATVAREEQERLEELRLEQEVARQGLEGSLRVAEQAQEALEQQLPTLRHERSQLQEQLAQLSRQLSGREQELEQARREAQRQVEALERAAREKEALAKEHAGLAVQLVAAEREGRTLSEEATRLRLEKEALEGSLFEVQRQLAQLEARREQLEAEGQALLLAKETLTGELAGLRQQIIATQEKASLDKELMAQKLVQAEREAQASLREQRAAHEEDLQRLQREKEAAWRELEAERAQLQSQLQREQEELLARLEAEKEELSEEIAALQQERDEGLLLAESEKQQALSLKESEKTALSEKLMGTRHSLATISLEMERQKRDAQSRQEQDRSTVNALTSELRDLRAQREEAAAAHAQEVRRLQEQARDLGKQRDSCLREAEELRTQLRLLEDARDGLRRELLEAQRKLRESQEGREVQRQEAGELRRSLGEGAKEREALRRSNEELRSAVKKAESERISLKLANEDKEQKLALLEEARTAVGKEAGELRTGLQEVERSRLEARRELQELRRQMKMLDSENTRLGRELAELQGRLALGERAEKESRRETLGLRQRLLKGEASLEVMRQELQVAQRKLQEQEGEFRTRERRLLGSLEEARGTEKQQLDHARGLELKLEAARAEAAELGLRLSAAEGRAQGLEAELARVEVQRRAAEAQLGGLRSALRRGLGLGRAPSPAPRPVPGSPARDAPAEGSGEGLNSPSTLECSPGSQPPSPGPATSPASPDLDPEAVRGALREFLQELRSAQRERDELRTQTSALNRQLAEMEAERDSATSRARQLQKAVAESEEARRSVDGRLSGVQAELALQEESVRRSERERRATLDQVATLERSLQATESELRASQEKISKMKANETKLEGDKRRLKEVLDASESRTVKLELQRRSLEGELQRSRLGLSDREAQAQALQDRVDSLQRQVADSEVKAGTLQLTVERLNGALAKVEESEGALRDKVRGLTEALAQSSASLNSTRDKNLHLQKALTACEHDRQVLQERLDAARQALSEARKQSSSLGEQVQTLRGEVADLELQRVEAEGQLQQLREVLRQRQEGEAAALNTVQKLQDERRLLQERLGSLQRALAQLEAEKREVERSALRLEKDRVALRRTLDKVEREKLRSHEDTVRLSAEKGRLDRTLTGAELELAEAQRQIQQLEAQVVVLEQSHSPAQLEVDAQQQQLELQQEVERLRSAQAQTERTLEARERAHRQRVRGLEEQVSTLKGQLQQELRRSSAPFSPPSGPPEK.

Coiled-coil stretches lie at residues 70-262 and 318-444; these read ATEM…KVTN and ERDL…LETE. A compositionally biased stretch (polar residues) spans 464–483; sequence SESGVQLSGSERTADASNGS. The segment at 464–518 is disordered; the sequence is SESGVQLSGSERTADASNGSLRGLSGQRTPSPPRRSSPGRGRSPRRGPSPACSDS. Positions 499–513 are enriched in low complexity; that stretch reads SSPGRGRSPRRGPSP. Coiled coils occupy residues 546-1058 and 1091-1438; these read QDLL…LAES and EMER…GLRS. 2 disordered regions span residues 1184–1226 and 1443–1575; these read LRES…RSAV and GLGL…GRLS. Phosphoserine occurs at positions 1460, 1470, 1476, 1483, 1486, 1490, and 1496. A coiled-coil region spans residues 1505-1704; the sequence is EAVRGALREF…DSEVKAGTLQ (200 aa). Over residues 1510–1529 the composition is skewed to basic and acidic residues; that stretch reads ALREFLQELRSAQRERDELR. Phosphoserine occurs at positions 1575 and 1660. Positions 1962-2017 are disordered; the sequence is RSAQAQTERTLEARERAHRQRVRGLEEQVSTLKGQLQQELRRSSAPFSPPSGPPEK. The segment covering 1989 to 1999 has biased composition (polar residues); sequence QVSTLKGQLQQ. Positions 2008–2017 are enriched in pro residues; that stretch reads FSPPSGPPEK.

This sequence belongs to the rootletin family. In terms of assembly, homomer. Interacts with KLC3, NEK2 and the N-terminus of CEP250. Interacts with CEP44. Interacts with CCDC102B (via N-terminus). Phosphorylated by NEK2 which may regulate its association with centrosomes.

The protein resides in the cytoplasm. It is found in the cytoskeleton. The protein localises to the microtubule organizing center. Its subcellular location is the centrosome. It localises to the centriole. The protein resides in the cilium basal body. In terms of biological role, major structural component of the ciliary rootlet, a cytoskeletal-like structure in ciliated cells which originates from the basal body at the proximal end of a cilium and extends proximally toward the cell nucleus. Furthermore, is required for the correct positioning of the cilium basal body relative to the cell nucleus, to allow for ciliogenesis. Contributes to centrosome cohesion before mitosis. This is Rootletin from Homo sapiens (Human).